Reading from the N-terminus, the 192-residue chain is Pyruvate kinase (192 aa).

Residue Arg41 participates in substrate binding. K(+)-binding residues include Asn43, Ser45, Asp75, and Thr76. 43-46 contributes to the ATP binding site; that stretch reads NFSH.

Belongs to the pyruvate kinase family. Mg(2+) is required as a cofactor. The cofactor is K(+).

The enzyme catalyses pyruvate + ATP = phosphoenolpyruvate + ADP + H(+). It functions in the pathway carbohydrate degradation; glycolysis; pyruvate from D-glyceraldehyde 3-phosphate: step 5/5. This chain is Pyruvate kinase (pyk), found in Spiroplasma citri.